Here is a 123-residue protein sequence, read N- to C-terminus: Ribonuclease P protein component (123 aa).

Belongs to the RnpA family. As to quaternary structure, consists of a catalytic RNA component (M1 or rnpB) and a protein subunit.

It carries out the reaction Endonucleolytic cleavage of RNA, removing 5'-extranucleotides from tRNA precursor.. RNaseP catalyzes the removal of the 5'-leader sequence from pre-tRNA to produce the mature 5'-terminus. It can also cleave other RNA substrates such as 4.5S RNA. The protein component plays an auxiliary but essential role in vivo by binding to the 5'-leader sequence and broadening the substrate specificity of the ribozyme. The chain is Ribonuclease P protein component from Bordetella petrii (strain ATCC BAA-461 / DSM 12804 / CCUG 43448).